A 349-amino-acid chain; its full sequence is Septin-2 (349 aa).

Positions 33-305 constitute a Septin-type G domain; that stretch reads KGFEFTLMVV…ENFRSERLKR (273 aa). Positions 43-50 are G1 motif; that stretch reads GESGLGKS. Residues 43–50, threonine 77, glycine 103, 182–190, glycine 240, and arginine 255 each bind GTP; these read GESGLGKS and KADTLTLKE. The interval 100 to 103 is G3 motif; it reads DTPG. Residues 181 to 184 form a G4 motif region; it reads AKAD. The important for dimerization stretch occupies residues 259-269; the sequence is WGVVEVENPEH.

The protein belongs to the TRAFAC class TrmE-Era-EngA-EngB-Septin-like GTPase superfamily. Septin GTPase family. Septins polymerize into heterooligomeric protein complexes that form filaments, and associate with cellular membranes, actin filaments and microtubules. GTPase activity is required for filament formation. Can form heterooligomers with other family members and form filaments.

It is found in the cytoplasm. The protein localises to the cytoskeleton. It localises to the spindle. Its subcellular location is the cleavage furrow. The protein resides in the midbody. It is found in the cell cortex. The protein localises to the cell projection. It localises to the cilium membrane. Filament-forming cytoskeletal GTPase. Required for normal organization of the actin cytoskeleton. Plays a role in the biogenesis of polarized columnar-shaped epithelium by maintaining polyglutamylated microtubules, thus facilitating efficient vesicle transport, and by impeding MAP4 binding to tubulin. Required for the progression through mitosis. Forms a scaffold at the midplane of the mitotic splindle required to maintain CENPE localization at kinetochores and consequently chromosome congression. During anaphase, may be required for chromosome segregation and spindle elongation. Plays a role in ciliogenesis and collective cell movements. In cilia, required for the integrity of the diffusion barrier at the base of the primary cilium that prevents diffusion of transmembrane proteins between the cilia and plasma membranes. The chain is Septin-2 from Gallus gallus (Chicken).